Here is a 71-residue protein sequence, read N- to C-terminus: Translation initiation factor IF-1 (71 aa).

The region spanning 1–71 (MSKQEMLSFS…LTKGRITFRG (71 aa)) is the S1-like domain.

Belongs to the IF-1 family. As to quaternary structure, component of the 30S ribosomal translation pre-initiation complex which assembles on the 30S ribosome in the order IF-2 and IF-3, IF-1 and N-formylmethionyl-tRNA(fMet); mRNA recruitment can occur at any time during PIC assembly.

The protein localises to the cytoplasm. Its function is as follows. One of the essential components for the initiation of protein synthesis. Stabilizes the binding of IF-2 and IF-3 on the 30S subunit to which N-formylmethionyl-tRNA(fMet) subsequently binds. Helps modulate mRNA selection, yielding the 30S pre-initiation complex (PIC). Upon addition of the 50S ribosomal subunit IF-1, IF-2 and IF-3 are released leaving the mature 70S translation initiation complex. This Pelagibacter ubique (strain HTCC1062) protein is Translation initiation factor IF-1.